A 335-amino-acid chain; its full sequence is Protein-lysine N-methyltransferase EEF2KMT (335 aa).

M1 is modified (N-acetylmethionine). S-adenosyl-L-methionine contacts are provided by residues W139, 165–167 (GSG), W228, and A247.

The protein belongs to the class I-like SAM-binding methyltransferase superfamily. EEF2KMT family. In terms of assembly, interacts with FAM86B2 and FAM86C1P.

The protein resides in the cytoplasm. The catalysed reaction is L-lysyl-[protein] + 3 S-adenosyl-L-methionine = N(6),N(6),N(6)-trimethyl-L-lysyl-[protein] + 3 S-adenosyl-L-homocysteine + 3 H(+). In terms of biological role, catalyzes the trimethylation of eukaryotic elongation factor 2 (EEF2) on 'Lys-525'. The sequence is that of Protein-lysine N-methyltransferase EEF2KMT (Eef2kmt) from Mus musculus (Mouse).